Consider the following 498-residue polypeptide: Hexokinase-3 (498 aa).

A helical transmembrane segment spans residues 4–24 (VAVAFAAVAVVAACSVAAVMV). The 460-residue stretch at 35 to 494 (RTVVEILKEL…SSIGSALLVA (460 aa)) folds into the Hexokinase domain. Residues 90–227 (TGREKGTYYA…GLDMHVAALV (138 aa)) are hexokinase small subdomain. 2 residues coordinate ADP: Gly104 and Thr105. Positions 193, 194, 228, and 229 each coordinate D-glucose. Residues 228 to 483 (NDTVGALSLG…QYVVVKAMED (256 aa)) form a hexokinase large subdomain region. Thr252 contributes to the ADP binding site. The D-glucose site is built by Asn255, Glu283, and Glu314. An ADP-binding site is contributed by Gly448.

It belongs to the hexokinase family. Expressed in roots, emerging lateral roots, vascular tissues of cotyledons, roots and leaves, root and shoot meristems, anther filaments and funiculi of mature seeds.

It is found in the mitochondrion outer membrane. It carries out the reaction a D-hexose + ATP = a D-hexose 6-phosphate + ADP + H(+). The catalysed reaction is D-fructose + ATP = D-fructose 6-phosphate + ADP + H(+). It catalyses the reaction D-glucose + ATP = D-glucose 6-phosphate + ADP + H(+). The protein operates within carbohydrate metabolism; hexose metabolism. It participates in carbohydrate degradation; glycolysis; D-glyceraldehyde 3-phosphate and glycerone phosphate from D-glucose: step 1/4. Fructose and glucose phosphorylating enzyme. May be involved in the phosphorylation of glucose during the export from mitochondrion to cytosol. Plays a role in plant growth and development, perhaps by mediating cross-talk between glucose and hormone response pathways. Involved in root hair cell development by mediating certain aspects of cross talk between glucose and ethylene response pathways. This chain is Hexokinase-3, found in Arabidopsis thaliana (Mouse-ear cress).